A 260-amino-acid polypeptide reads, in one-letter code: Carbonic anhydrase 3 (260 aa).

Position 2 is an N-acetylalanine (Ala2). The Alpha-carbonic anhydrase domain maps to 3–259 (KEWGYADHNG…IKGRIVKASF (257 aa)). A phosphoserine mark is found at Ser29, Ser43, Ser50, and Ser55. The tract at residues 64–67 (KTCR) is involved in proton transfer. Residue Thr73 is modified to Phosphothreonine. The Zn(2+) site is built by His94, His96, and His119. Tyr127 bears the Phosphotyrosine mark. S-glutathionyl cysteine is present on residues Cys182 and Cys187. A substrate-binding site is contributed by 198-199 (TT). Phosphothreonine is present on Thr216. Position 219 is a phosphoserine (Ser219).

The protein belongs to the alpha-carbonic anhydrase family. The cofactor is Zn(2+). In terms of processing, S-thiolated both by thiol-disulfide exchange with glutathione disulfide and by oxyradical-initiated S-thiolation with reduced glutathione. S-glutathionylated in hepatocytes under oxidative stress.

The protein resides in the cytoplasm. The enzyme catalyses hydrogencarbonate + H(+) = CO2 + H2O. With respect to regulation, inhibited by acetazolamide. Functionally, reversible hydration of carbon dioxide. The polypeptide is Carbonic anhydrase 3 (CA3) (Bos taurus (Bovine)).